A 439-amino-acid polypeptide reads, in one-letter code: General transcription factor IIE subunit 1 (439 aa).

Ala2 is modified (N-acetylalanine). Residues 14-104 enclose the HTH TFE/IIEalpha-type domain; sequence LKRLAKYVIR…NYRTLVNVVK (91 aa). Lys67 is subject to N6-acetyllysine. Zn(2+) contacts are provided by Cys129, Cys132, Cys154, and Cys157. The C4-type zinc-finger motif lies at 129–157; sequence CPVCSSTFTDLEANQLFDPMTGTFRCTFC. Ser268 bears the Phosphoserine mark. Over residues 333 to 344 the composition is skewed to low complexity; it reads SSAMAGSVGAAA. Residues 333–392 form a disordered region; sequence SSAMAGSVGAAAPVTTANGSDSESETSESDDDSPPRPAAVAVHKREEDEEEDDEFEEVAD. 2 stretches are compositionally biased toward acidic residues: residues 354–364 and 379–392; these read SESETSESDDD and EDEE…EVAD.

This sequence belongs to the TFIIE alpha subunit family. As to quaternary structure, tetramer of two alpha and two beta chains. Interacts with TAF6/TAFII80. Interacts with ATF7IP. Interacts with SND1. Part of TBP-based Pol II pre-initiation complex (PIC), in which Pol II core assembles with general transcription factors and other specific initiation factors including GTF2E1, GTF2E2, GTF2F1, GTF2F2, TCEA1, ERCC2, ERCC3, GTF2H2, GTF2H3, GTF2H4, GTF2H5, GTF2A1, GTF2A2, GTF2B and TBP; this large multi-subunit PIC complex mediates DNA unwinding and targets Pol II core to the transcription start site where the first phosphodiester bond forms.

It localises to the nucleus. Functionally, recruits TFIIH to the initiation complex and stimulates the RNA polymerase II C-terminal domain kinase and DNA-dependent ATPase activities of TFIIH. Both TFIIH and TFIIE are required for promoter clearance by RNA polymerase. The polypeptide is General transcription factor IIE subunit 1 (GTF2E1) (Pongo abelii (Sumatran orangutan)).